Reading from the N-terminus, the 490-residue chain is Beta-glucosidase 42 (490 aa).

A beta-D-glucoside-binding positions include Gln35, His137, 182 to 183 (NE), Tyr317, and Glu388. Catalysis depends on Glu183, which acts as the Proton donor. Catalysis depends on Glu388, which acts as the Nucleophile. N-linked (GlcNAc...) asparagine glycosylation is present at Asn420. Residues Trp437, 444–445 (EW), and Phe453 contribute to the a beta-D-glucoside site.

It belongs to the glycosyl hydrolase 1 family. Expressed at low levels predominantly in root epidermal cells.

It carries out the reaction Hydrolysis of terminal, non-reducing beta-D-glucosyl residues with release of beta-D-glucose.. Glucosidase that hydrolyzes scopolin and various beta-glucosides, cellooligosaccharides (mainly cellotriose) and laminarioligosaccharides. Can use p-nitrophenyl-beta-glucosides (pNP beta-Glc) and p-nitrophenyl-beta-D-fucosides (pNP beta-D-Fuc) as substrates, and, to a lower extent, beta-galactosides, beta-mannosides and beta-xylosides. Involved in the secretion of root-derived phenolics upon iron ions (Fe) depletion. Promotes disease resistance toward B.cinerea, H.arabidopsidis and P.syringae pv. tomato DC3000. Required during rhizobacteria-mediated (e.g. P.fluorescens WCS417r) broad-spectrum induced systemic resistance (ISR) against several pathogens. This Arabidopsis thaliana (Mouse-ear cress) protein is Beta-glucosidase 42.